The following is a 311-amino-acid chain: Maspardin (311 aa).

Residues 86 to 159 enclose the AB hydrolase-1 domain; the sequence is EFCDGFRKLL…NSFWLMPSFM (74 aa).

Belongs to the AB hydrolase superfamily.

The protein localises to the cytoplasm. The sequence is that of Maspardin (spg21) from Danio rerio (Zebrafish).